The following is a 173-amino-acid chain: Transcription factor E (173 aa).

An HTH TFE/IIEalpha-type domain is found at 9–92; it reads ADKAIFAYLH…LWELELDNMY (84 aa).

It belongs to the TFE family. Monomer. Interaction with RNA polymerase subunits RpoF and RpoE is necessary for Tfe stimulatory transcription activity. Able to interact with Tbp and RNA polymerase in the absence of DNA promoter. Interacts both with the preinitiation and elongation complexes.

In terms of biological role, transcription factor that plays a role in the activation of archaeal genes transcribed by RNA polymerase. Facilitates transcription initiation by enhancing TATA-box recognition by TATA-box-binding protein (Tbp), and transcription factor B (Tfb) and RNA polymerase recruitment. Not absolutely required for transcription in vitro, but particularly important in cases where Tbp or Tfb function is not optimal. It dynamically alters the nucleic acid-binding properties of RNA polymerases by stabilizing the initiation complex and destabilizing elongation complexes. Seems to translocate with the RNA polymerase following initiation and acts by binding to the non template strand of the transcription bubble in elongation complexes. This is Transcription factor E from Methanospirillum hungatei JF-1 (strain ATCC 27890 / DSM 864 / NBRC 100397 / JF-1).